The chain runs to 387 residues: Galactokinase (387 aa).

33-36 (EHID) is a binding site for substrate. Residues Ser67 and 124 to 130 (GAGLSSS) contribute to the ATP site. Mg(2+) contacts are provided by Ser130 and Glu162. Asp174 (proton acceptor) is an active-site residue. Residue Tyr224 participates in substrate binding.

It belongs to the GHMP kinase family. GalK subfamily.

The protein localises to the cytoplasm. It catalyses the reaction alpha-D-galactose + ATP = alpha-D-galactose 1-phosphate + ADP + H(+). It participates in carbohydrate metabolism; galactose metabolism. In terms of biological role, catalyzes the transfer of the gamma-phosphate of ATP to D-galactose to form alpha-D-galactose-1-phosphate (Gal-1-P). This Clostridium perfringens (strain 13 / Type A) protein is Galactokinase.